Here is a 410-residue protein sequence, read N- to C-terminus: Lipoyl synthase, mitochondrial (410 aa).

A mitochondrion-targeting transit peptide spans 1-29 (MASTTVCSAARIRVASSQVLRSIANTRTY). Polar residues predominate over residues 29-39 (YATTSPESSIP). The interval 29-49 (YATTSPESSIPETKPTAKRTP) is disordered. Residues Cys-129, Cys-134, Cys-140, Cys-160, Cys-164, Cys-167, and Ser-375 each contribute to the [4Fe-4S] cluster site. The Radical SAM core domain maps to 143–364 (GGSKAAATAT…KEKAMEMGFL (222 aa)).

This sequence belongs to the radical SAM superfamily. Lipoyl synthase family. It depends on [4Fe-4S] cluster as a cofactor.

The protein resides in the mitochondrion. It catalyses the reaction [[Fe-S] cluster scaffold protein carrying a second [4Fe-4S](2+) cluster] + N(6)-octanoyl-L-lysyl-[protein] + 2 oxidized [2Fe-2S]-[ferredoxin] + 2 S-adenosyl-L-methionine + 4 H(+) = [[Fe-S] cluster scaffold protein] + N(6)-[(R)-dihydrolipoyl]-L-lysyl-[protein] + 4 Fe(3+) + 2 hydrogen sulfide + 2 5'-deoxyadenosine + 2 L-methionine + 2 reduced [2Fe-2S]-[ferredoxin]. The protein operates within protein modification; protein lipoylation via endogenous pathway; protein N(6)-(lipoyl)lysine from octanoyl-[acyl-carrier-protein]: step 2/2. Functionally, catalyzes the radical-mediated insertion of two sulfur atoms into the C-6 and C-8 positions of the octanoyl moiety bound to the lipoyl domains of lipoate-dependent enzymes, thereby converting the octanoylated domains into lipoylated derivatives. The polypeptide is Lipoyl synthase, mitochondrial (Arthroderma otae (strain ATCC MYA-4605 / CBS 113480) (Microsporum canis)).